Reading from the N-terminus, the 514-residue chain is Lysine--tRNA ligase (514 aa).

Residues 1 to 13 (MSKPNNQNQQNNQ) are compositionally biased toward low complexity. Positions 1–21 (MSKPNNQNQQNNQEPAPEDAN) are disordered. Mg(2+)-binding residues include Glu422 and Glu429.

This sequence belongs to the class-II aminoacyl-tRNA synthetase family. In terms of assembly, homodimer. It depends on Mg(2+) as a cofactor.

The protein resides in the cytoplasm. It carries out the reaction tRNA(Lys) + L-lysine + ATP = L-lysyl-tRNA(Lys) + AMP + diphosphate. The chain is Lysine--tRNA ligase from Psychrobacter cryohalolentis (strain ATCC BAA-1226 / DSM 17306 / VKM B-2378 / K5).